The sequence spans 180 residues: MVDENNLIWIDLEMTGLNPDHDRIIEIATLVTDANLNVLAEGPVLAVHQSDSQLALMDDWNVRTHGASGLTDRVKVSTADERAAELETLAFLQKWVPAGKSPICGNSIGQDRRFLFRYMPELEAYFHYRYLDVSTLKELARRWKPEIMAGFKKQGTHQAMDDIRESLAELVYYRENFLRL.

In terms of domain architecture, Exonuclease spans 7-170 (LIWIDLEMTG…DDIRESLAEL (164 aa)). Y128 is a catalytic residue.

This sequence belongs to the oligoribonuclease family.

It is found in the cytoplasm. Functionally, 3'-to-5' exoribonuclease specific for small oligoribonucleotides. The protein is Oligoribonuclease of Pectobacterium atrosepticum (strain SCRI 1043 / ATCC BAA-672) (Erwinia carotovora subsp. atroseptica).